A 278-amino-acid polypeptide reads, in one-letter code: HTH-type transcriptional activator RhaS (278 aa).

An HTH araC/xylS-type domain is found at 174 to 272 (NLLLAWLEDH…NWSPRDIRQG (99 aa)). 2 consecutive DNA-binding regions (H-T-H motif) follow at residues 191 to 212 (DAVAEQFSLSLRTLHRQLKQQT) and 239 to 262 (VTDIAYRCGFSDSNHFSTLFRREF).

Binds DNA as a dimer.

It localises to the cytoplasm. Activates expression of the rhaBAD and rhaT operons. The chain is HTH-type transcriptional activator RhaS from Escherichia coli O139:H28 (strain E24377A / ETEC).